The sequence spans 319 residues: Biotin synthase (319 aa).

In terms of domain architecture, Radical SAM core spans 44-273 (IHGDGIDLCS…EAKIRLAGGR (230 aa)). C62, C66, and C69 together coordinate [4Fe-4S] cluster. Positions 106, 138, 198, and 268 each coordinate [2Fe-2S] cluster.

This sequence belongs to the radical SAM superfamily. Biotin synthase family. As to quaternary structure, homodimer. [4Fe-4S] cluster serves as cofactor. The cofactor is [2Fe-2S] cluster.

It carries out the reaction (4R,5S)-dethiobiotin + (sulfur carrier)-SH + 2 reduced [2Fe-2S]-[ferredoxin] + 2 S-adenosyl-L-methionine = (sulfur carrier)-H + biotin + 2 5'-deoxyadenosine + 2 L-methionine + 2 oxidized [2Fe-2S]-[ferredoxin]. It participates in cofactor biosynthesis; biotin biosynthesis; biotin from 7,8-diaminononanoate: step 2/2. In terms of biological role, catalyzes the conversion of dethiobiotin (DTB) to biotin by the insertion of a sulfur atom into dethiobiotin via a radical-based mechanism. In Clostridium perfringens (strain 13 / Type A), this protein is Biotin synthase.